A 73-amino-acid chain; its full sequence is Small ribosomal subunit protein bS18 (73 aa).

It belongs to the bacterial ribosomal protein bS18 family. As to quaternary structure, part of the 30S ribosomal subunit. Forms a tight heterodimer with protein bS6.

Binds as a heterodimer with protein bS6 to the central domain of the 16S rRNA, where it helps stabilize the platform of the 30S subunit. The polypeptide is Small ribosomal subunit protein bS18 (Prochlorococcus marinus subsp. pastoris (strain CCMP1986 / NIES-2087 / MED4)).